A 27-amino-acid polypeptide reads, in one-letter code: Secretin (27 aa).

Residue Met27 is modified to Methionine amide.

This sequence belongs to the glucagon family.

It is found in the secreted. Its function is as follows. Hormone involved in different processes, such as regulation of the pH of the duodenal content, food intake and water homeostasis. Exerts its biological effects by binding to secretin receptor (SCTR), a G-protein coupled receptor expressed in the basolateral domain of several cells. The protein is Secretin of Gallus gallus (Chicken).